The chain runs to 254 residues: 3-deoxy-manno-octulosonate cytidylyltransferase (254 aa).

This sequence belongs to the KdsB family.

It is found in the cytoplasm. It carries out the reaction 3-deoxy-alpha-D-manno-oct-2-ulosonate + CTP = CMP-3-deoxy-beta-D-manno-octulosonate + diphosphate. It functions in the pathway nucleotide-sugar biosynthesis; CMP-3-deoxy-D-manno-octulosonate biosynthesis; CMP-3-deoxy-D-manno-octulosonate from 3-deoxy-D-manno-octulosonate and CTP: step 1/1. It participates in bacterial outer membrane biogenesis; lipopolysaccharide biosynthesis. Functionally, activates KDO (a required 8-carbon sugar) for incorporation into bacterial lipopolysaccharide in Gram-negative bacteria. The protein is 3-deoxy-manno-octulosonate cytidylyltransferase of Pseudomonas entomophila (strain L48).